Here is a 987-residue protein sequence, read N- to C-terminus: UvrABC system protein A (987 aa).

33-40 provides a ligand contact to ATP; the sequence is GLSGSGKS. The C4-type zinc-finger motif lies at 255-282; sequence CPVCDYSLPELEPRLFSFNAPVGACPSC. ABC transporter domains follow at residues 312 to 589 and 609 to 938; these read WDRR…PRSL and PNPK…QFLA. 642 to 649 is an ATP binding site; that stretch reads GVSGSGKS. The segment at 741 to 767 adopts a C4-type zinc-finger fold; it reads CEACQGDGMIKVEMHFLPDVYVPCDVC. Positions 948–987 are disordered; sequence ETRPAAMANKPDARPPRKVKPEKVAKAAKSATKKTAKKAS. The segment covering 958–972 has biased composition (basic and acidic residues); sequence PDARPPRKVKPEKVA. A compositionally biased stretch (basic residues) spans 978–987; it reads ATKKTAKKAS.

This sequence belongs to the ABC transporter superfamily. UvrA family. Forms a heterotetramer with UvrB during the search for lesions.

It localises to the cytoplasm. In terms of biological role, the UvrABC repair system catalyzes the recognition and processing of DNA lesions. UvrA is an ATPase and a DNA-binding protein. A damage recognition complex composed of 2 UvrA and 2 UvrB subunits scans DNA for abnormalities. When the presence of a lesion has been verified by UvrB, the UvrA molecules dissociate. The chain is UvrABC system protein A from Xanthomonas axonopodis pv. citri (strain 306).